The primary structure comprises 739 residues: Sulfate transporter (739 aa).

The interval 1 to 27 is disordered; sequence MSSESKEQHNVSPRDSAEGNDSYPSGI. S12 and S16 each carry phosphoserine. A run of 2 helical transmembrane segments spans residues 112 to 132 and 137 to 157; these read VMSG…YSLL and PVYG…LGTS. Residues N199 and N205 are each glycosylated (N-linked (GlcNAc...) asparagine). Transmembrane regions (helical) follow at residues 219 to 239 and 242 to 262; these read IMVG…MGFF and GFVS…GASF. N357 carries N-linked (GlcNAc...) asparagine glycosylation. 4 helical membrane passes run 378 to 398, 420 to 440, 455 to 475, and 524 to 544; these read LIPS…AITV, AIGF…SAAL, LSGV…APLF, and LLST…CVIL. In terms of domain architecture, STAS spans 568 to 719; sequence AYKNLQIKPG…YSVYEAMAFA (152 aa).

The protein belongs to the SLC26A/SulP transporter (TC 2.A.53) family. Post-translationally, N-glycosylated. Ubiquitously expressed.

Its subcellular location is the cell membrane. The protein localises to the apical cell membrane. The enzyme catalyses oxalate(in) + sulfate(out) = oxalate(out) + sulfate(in). The catalysed reaction is sulfate(out) + 2 chloride(in) = sulfate(in) + 2 chloride(out). It carries out the reaction oxalate(out) + 2 chloride(in) = oxalate(in) + 2 chloride(out). It catalyses the reaction bromide(in) + chloride(out) = bromide(out) + chloride(in). The enzyme catalyses nitrate(in) + chloride(out) = nitrate(out) + chloride(in). The catalysed reaction is iodide(in) + chloride(out) = iodide(out) + chloride(in). An extracellular acidic pH inhibits chloride-sulfate and chloride-oxalate exchange activity whereas an intracellular acidic pH activates chloride-sulfate exchange with no effect on chloride-oxalate exchange activity. Its function is as follows. Sulfate transporter which mediates sulfate uptake into chondrocytes in order to maintain adequate sulfation of proteoglycans which is needed for cartilage development. Mediates electroneutral anion exchange of sulfate ions for oxalate ions and of sulfate and oxalate ions for chloride ions. Mediates exchange of sulfate and oxalate ions for hydroxyl ions and of chloride ions for bromide, iodide and nitrate ions. The coupling of sulfate transport to both hydroxyl and chloride ions likely serves to ensure transport at both acidic pH when most sulfate uptake is mediated by sulfate-hydroxide exchange and alkaline pH when most sulfate uptake is mediated by sulfate-chloride exchange. Essential for chondrocyte proliferation, differentiation and cell size expansion. In Homo sapiens (Human), this protein is Sulfate transporter (SLC26A2).